A 155-amino-acid chain; its full sequence is Low molecular weight phosphotyrosine protein phosphatase 1 (155 aa).

The Nucleophile role is filled by C9. The active site involves R15. D124 (proton donor) is an active-site residue.

This sequence belongs to the low molecular weight phosphotyrosine protein phosphatase family. As to expression, cone cells and primary pigment cells in developing pupal retina.

It is found in the cytoplasm. The enzyme catalyses O-phospho-L-tyrosyl-[protein] + H2O = L-tyrosyl-[protein] + phosphate. It carries out the reaction a phosphate monoester + H2O = an alcohol + phosphate. Its function is as follows. Acts on tyrosine phosphorylated proteins, low-MW aryl phosphates and natural and synthetic acyl phosphates. This chain is Low molecular weight phosphotyrosine protein phosphatase 1 (primo-1), found in Drosophila melanogaster (Fruit fly).